Here is a 208-residue protein sequence, read N- to C-terminus: Meiotically up-regulated gene 9 protein (208 aa).

The disordered stretch occupies residues 77-114 (VPASNEKAARVSNLKTVPSLKRENKEVNANSKPPVKQQ).

Its function is as follows. Has a role in meiosis. This is Meiotically up-regulated gene 9 protein (mug9) from Schizosaccharomyces pombe (strain 972 / ATCC 24843) (Fission yeast).